The following is a 278-amino-acid chain: tRNA pseudouridine synthase A (278 aa).

Residue aspartate 51 is the Nucleophile of the active site. Tyrosine 109 is a substrate binding site.

This sequence belongs to the tRNA pseudouridine synthase TruA family. In terms of assembly, homodimer.

It catalyses the reaction uridine(38/39/40) in tRNA = pseudouridine(38/39/40) in tRNA. Formation of pseudouridine at positions 38, 39 and 40 in the anticodon stem and loop of transfer RNAs. The chain is tRNA pseudouridine synthase A from Paracidovorax citrulli (strain AAC00-1) (Acidovorax citrulli).